The following is a 67-amino-acid chain: Large ribosomal subunit protein uL29 (67 aa).

Belongs to the universal ribosomal protein uL29 family.

The sequence is that of Large ribosomal subunit protein uL29 from Exiguobacterium sibiricum (strain DSM 17290 / CCUG 55495 / CIP 109462 / JCM 13490 / 255-15).